The primary structure comprises 185 residues: UPF0301 protein Tbd_2579 (185 aa).

It belongs to the UPF0301 (AlgH) family.

The chain is UPF0301 protein Tbd_2579 from Thiobacillus denitrificans (strain ATCC 25259 / T1).